The chain runs to 216 residues: Redox-sensing transcriptional repressor Rex (216 aa).

The segment at residues 16–55 (VYYRYLNVLLNANKHRVSSTELSEAVQVDSATIRRDFSYF) is a DNA-binding region (H-T-H motif). Residue 90–95 (GVGSLG) coordinates NAD(+).

Belongs to the transcriptional regulatory Rex family. As to quaternary structure, homodimer.

The protein resides in the cytoplasm. Functionally, modulates transcription in response to changes in cellular NADH/NAD(+) redox state. The chain is Redox-sensing transcriptional repressor Rex from Limosilactobacillus fermentum (strain NBRC 3956 / LMG 18251) (Lactobacillus fermentum).